Consider the following 337-residue polypeptide: Anthranilate phosphoribosyltransferase (337 aa).

Residues glycine 80, 83-84, threonine 88, 90-93, 108-116, and serine 120 contribute to the 5-phospho-alpha-D-ribose 1-diphosphate site; these read GD, NIST, and KHGNRAVSS. Glycine 80 is a binding site for anthranilate. Serine 92 provides a ligand contact to Mg(2+). Asparagine 111 provides a ligand contact to anthranilate. Residue arginine 166 participates in anthranilate binding. The Mg(2+) site is built by aspartate 224 and glutamate 225.

This sequence belongs to the anthranilate phosphoribosyltransferase family. As to quaternary structure, homodimer. It depends on Mg(2+) as a cofactor.

The enzyme catalyses N-(5-phospho-beta-D-ribosyl)anthranilate + diphosphate = 5-phospho-alpha-D-ribose 1-diphosphate + anthranilate. It functions in the pathway amino-acid biosynthesis; L-tryptophan biosynthesis; L-tryptophan from chorismate: step 2/5. In terms of biological role, catalyzes the transfer of the phosphoribosyl group of 5-phosphorylribose-1-pyrophosphate (PRPP) to anthranilate to yield N-(5'-phosphoribosyl)-anthranilate (PRA). The polypeptide is Anthranilate phosphoribosyltransferase (Anaeromyxobacter dehalogenans (strain 2CP-C)).